The sequence spans 649 residues: Threonine--tRNA ligase (649 aa).

The TGS domain occupies M1–T63. Positions D245–P543 are catalytic. Zn(2+)-binding residues include C339, H390, and H520.

Belongs to the class-II aminoacyl-tRNA synthetase family. As to quaternary structure, homodimer. Zn(2+) is required as a cofactor.

It is found in the cytoplasm. The catalysed reaction is tRNA(Thr) + L-threonine + ATP = L-threonyl-tRNA(Thr) + AMP + diphosphate + H(+). Catalyzes the attachment of threonine to tRNA(Thr) in a two-step reaction: L-threonine is first activated by ATP to form Thr-AMP and then transferred to the acceptor end of tRNA(Thr). Also edits incorrectly charged L-seryl-tRNA(Thr). The sequence is that of Threonine--tRNA ligase from Ligilactobacillus salivarius (strain UCC118) (Lactobacillus salivarius).